The chain runs to 206 residues: High frequency lysogenization protein HflD homolog (206 aa).

This sequence belongs to the HflD family.

The protein resides in the cytoplasm. Its subcellular location is the cell inner membrane. This chain is High frequency lysogenization protein HflD homolog, found in Pseudomonas paraeruginosa (strain DSM 24068 / PA7) (Pseudomonas aeruginosa (strain PA7)).